Reading from the N-terminus, the 357-residue chain is 3-isopropylmalate dehydrogenase (357 aa).

An NAD(+)-binding site is contributed by 76 to 89; that stretch reads GPQWDTIDPSLRPE. Residues Arg96, Arg106, Arg134, and Asp224 each coordinate substrate. The Mg(2+) site is built by Asp224, Asp248, and Asp252. Residue 282 to 294 participates in NAD(+) binding; it reads GSAPDIAGKGIAN.

It belongs to the isocitrate and isopropylmalate dehydrogenases family. LeuB type 1 subfamily. In terms of assembly, homodimer. Mg(2+) serves as cofactor. Requires Mn(2+) as cofactor.

The protein resides in the cytoplasm. It carries out the reaction (2R,3S)-3-isopropylmalate + NAD(+) = 4-methyl-2-oxopentanoate + CO2 + NADH. The protein operates within amino-acid biosynthesis; L-leucine biosynthesis; L-leucine from 3-methyl-2-oxobutanoate: step 3/4. Catalyzes the oxidation of 3-carboxy-2-hydroxy-4-methylpentanoate (3-isopropylmalate) to 3-carboxy-4-methyl-2-oxopentanoate. The product decarboxylates to 4-methyl-2 oxopentanoate. The chain is 3-isopropylmalate dehydrogenase from Xanthomonas oryzae pv. oryzae (strain MAFF 311018).